We begin with the raw amino-acid sequence, 243 residues long: Tryptophan synthase alpha chain (243 aa).

Catalysis depends on proton acceptor residues Glu31 and Asp42.

It belongs to the TrpA family. As to quaternary structure, tetramer of two alpha and two beta chains.

The catalysed reaction is (1S,2R)-1-C-(indol-3-yl)glycerol 3-phosphate + L-serine = D-glyceraldehyde 3-phosphate + L-tryptophan + H2O. It functions in the pathway amino-acid biosynthesis; L-tryptophan biosynthesis; L-tryptophan from chorismate: step 5/5. The alpha subunit is responsible for the aldol cleavage of indoleglycerol phosphate to indole and glyceraldehyde 3-phosphate. The polypeptide is Tryptophan synthase alpha chain (Staphylococcus haemolyticus (strain JCSC1435)).